A 1387-amino-acid chain; its full sequence is DNA-directed RNA polymerase subunit beta'' (1387 aa).

Zn(2+) contacts are provided by Cys224, Cys295, Cys302, and Cys305.

It belongs to the RNA polymerase beta' chain family. RpoC2 subfamily. In plastids the minimal PEP RNA polymerase catalytic core is composed of four subunits: alpha, beta, beta', and beta''. When a (nuclear-encoded) sigma factor is associated with the core the holoenzyme is formed, which can initiate transcription. Requires Zn(2+) as cofactor.

It is found in the plastid. The protein resides in the chloroplast. The enzyme catalyses RNA(n) + a ribonucleoside 5'-triphosphate = RNA(n+1) + diphosphate. DNA-dependent RNA polymerase catalyzes the transcription of DNA into RNA using the four ribonucleoside triphosphates as substrates. This Panax ginseng (Korean ginseng) protein is DNA-directed RNA polymerase subunit beta''.